A 473-amino-acid polypeptide reads, in one-letter code: Putative malate dehydrogenase 1B (473 aa).

Belongs to the LDH/MDH superfamily. MDH type 2 family.

This is Putative malate dehydrogenase 1B (MDH1B) from Bos taurus (Bovine).